The primary structure comprises 891 residues: uncharacterized protein (891 aa).

An N-terminal signal peptide occupies residues 1-20 (MKILKSLVLLVLFMAMPAKA). Transmembrane regions (helical) follow at residues 525-545 (VTIF…VEVI), 568-588 (TYFF…VVGA), 614-634 (LLFI…IITI), 652-672 (VIAF…IILM), 685-705 (ISTL…FLLI), and 776-796 (FLVL…SYSL).

It belongs to the TrbL/VirB6 family.

It localises to the cell membrane. This is an uncharacterized protein from Rickettsia conorii (strain ATCC VR-613 / Malish 7).